A 633-amino-acid chain; its full sequence is Glutamyl-tRNA(Gln) amidotransferase subunit E (633 aa).

It belongs to the GatB/GatE family. GatE subfamily. Heterodimer of GatD and GatE.

It carries out the reaction L-glutamyl-tRNA(Gln) + L-glutamine + ATP + H2O = L-glutaminyl-tRNA(Gln) + L-glutamate + ADP + phosphate + H(+). Allows the formation of correctly charged Gln-tRNA(Gln) through the transamidation of misacylated Glu-tRNA(Gln) in organisms which lack glutaminyl-tRNA synthetase. The reaction takes place in the presence of glutamine and ATP through an activated gamma-phospho-Glu-tRNA(Gln). The GatDE system is specific for glutamate and does not act on aspartate. The protein is Glutamyl-tRNA(Gln) amidotransferase subunit E of Methanosarcina barkeri (strain Fusaro / DSM 804).